A 458-amino-acid chain; its full sequence is Serine--tRNA ligase (458 aa).

252–254 (TAE) lines the L-serine pocket. Residues 283 to 285 (RKE) and Val299 each bind ATP. Glu306 is a binding site for L-serine. 370 to 373 (EMVS) is an ATP binding site. Position 405 (Thr405) interacts with L-serine.

This sequence belongs to the class-II aminoacyl-tRNA synthetase family. Type-1 seryl-tRNA synthetase subfamily. In terms of assembly, homodimer. The tRNA molecule binds across the dimer.

The protein localises to the cytoplasm. The enzyme catalyses tRNA(Ser) + L-serine + ATP = L-seryl-tRNA(Ser) + AMP + diphosphate + H(+). It catalyses the reaction tRNA(Sec) + L-serine + ATP = L-seryl-tRNA(Sec) + AMP + diphosphate + H(+). Its pathway is aminoacyl-tRNA biosynthesis; selenocysteinyl-tRNA(Sec) biosynthesis; L-seryl-tRNA(Sec) from L-serine and tRNA(Sec): step 1/1. In terms of biological role, catalyzes the attachment of serine to tRNA(Ser). Is also able to aminoacylate tRNA(Sec) with serine, to form the misacylated tRNA L-seryl-tRNA(Sec), which will be further converted into selenocysteinyl-tRNA(Sec). The polypeptide is Serine--tRNA ligase (Sulfolobus acidocaldarius (strain ATCC 33909 / DSM 639 / JCM 8929 / NBRC 15157 / NCIMB 11770)).